The following is a 112-amino-acid chain: Nitrogen regulatory protein P-II (112 aa).

A Phosphoserine modification is found at Ser-49. Position 51 is an O-UMP-tyrosine (Tyr-51).

Belongs to the P(II) protein family. Homotrimer. Phosphorylation dependent on the nitrogen source and spectral light quality.

P-II indirectly controls the transcription of the GS gene (glnA). P-II prevents NR-II-catalyzed conversion of NR-I to NR-I-phosphate, the transcriptional activator of glnA. When P-II is phosphorylated, these events are reversed. In nitrogen-limiting conditions, when the ratio of Gln to 2-ketoglutarate decreases, P-II is phosphorylated which allows the deadenylation of glutamine synthetase (GS), thus activating the enzyme. The protein is Nitrogen regulatory protein P-II (glnB) of Microchaete diplosiphon (Fremyella diplosiphon).